An 829-amino-acid chain; its full sequence is Periplasmic nitrate reductase (829 aa).

The segment at residues methionine 1 to alanine 30 is a signal peptide (tat-type signal). The 4Fe-4S Mo/W bis-MGD-type domain occupies isoleucine 41–aspartate 97. Positions 48, 51, 55, and 83 each coordinate [4Fe-4S] cluster. Residues lysine 85, glutamine 152, asparagine 177, cysteine 181, tryptophan 214 to methionine 221, serine 245 to histidine 249, glutamine 264 to aspartate 266, methionine 374, glutamine 378, asparagine 484, serine 510 to aspartate 511, lysine 533, aspartate 560, and threonine 718 to threonine 727 each bind Mo-bis(molybdopterin guanine dinucleotide). Phenylalanine 794 contacts substrate. Mo-bis(molybdopterin guanine dinucleotide) is bound by residues asparagine 802 and lysine 819.

This sequence belongs to the prokaryotic molybdopterin-containing oxidoreductase family. NasA/NapA/NarB subfamily. As to quaternary structure, component of the periplasmic nitrate reductase NapAB complex composed of NapA and NapB. [4Fe-4S] cluster is required as a cofactor. Requires Mo-bis(molybdopterin guanine dinucleotide) as cofactor. In terms of processing, predicted to be exported by the Tat system. The position of the signal peptide cleavage has not been experimentally proven.

It is found in the periplasm. The enzyme catalyses 2 Fe(II)-[cytochrome] + nitrate + 2 H(+) = 2 Fe(III)-[cytochrome] + nitrite + H2O. Functionally, catalytic subunit of the periplasmic nitrate reductase complex NapAB. Receives electrons from NapB and catalyzes the reduction of nitrate to nitrite. In Vibrio vulnificus (strain YJ016), this protein is Periplasmic nitrate reductase.